Reading from the N-terminus, the 167-residue chain is Phosphopantetheine adenylyltransferase (167 aa).

A substrate-binding site is contributed by Ser11. ATP contacts are provided by residues 11–12 (SF) and His19. Substrate-binding residues include Lys43, Thr76, and Arg90. ATP contacts are provided by residues 91–93 (GIR), Glu101, and 126–132 (YDALSST).

This sequence belongs to the bacterial CoaD family. Homohexamer. Mg(2+) serves as cofactor.

It localises to the cytoplasm. The enzyme catalyses (R)-4'-phosphopantetheine + ATP + H(+) = 3'-dephospho-CoA + diphosphate. It participates in cofactor biosynthesis; coenzyme A biosynthesis; CoA from (R)-pantothenate: step 4/5. Reversibly transfers an adenylyl group from ATP to 4'-phosphopantetheine, yielding dephospho-CoA (dPCoA) and pyrophosphate. The polypeptide is Phosphopantetheine adenylyltransferase (Lacticaseibacillus paracasei (strain ATCC 334 / BCRC 17002 / CCUG 31169 / CIP 107868 / KCTC 3260 / NRRL B-441) (Lactobacillus paracasei)).